We begin with the raw amino-acid sequence, 371 residues long: Vasculin (371 aa).

Belongs to the vasculin family.

It localises to the nucleus. Functionally, functions as a GC-rich promoter-specific transactivating transcription factor. This chain is Vasculin (gpbp1), found in Xenopus laevis (African clawed frog).